The primary structure comprises 445 residues: Probable cytosol aminopeptidase (445 aa).

Mn(2+) contacts are provided by Lys217 and Asp222. Lys229 is a catalytic residue. Residues Asp240, Asp299, and Glu301 each contribute to the Mn(2+) site. Residue Arg303 is part of the active site.

This sequence belongs to the peptidase M17 family. Mn(2+) is required as a cofactor.

Its subcellular location is the cytoplasm. The catalysed reaction is Release of an N-terminal amino acid, Xaa-|-Yaa-, in which Xaa is preferably Leu, but may be other amino acids including Pro although not Arg or Lys, and Yaa may be Pro. Amino acid amides and methyl esters are also readily hydrolyzed, but rates on arylamides are exceedingly low.. It carries out the reaction Release of an N-terminal amino acid, preferentially leucine, but not glutamic or aspartic acids.. Presumably involved in the processing and regular turnover of intracellular proteins. Catalyzes the removal of unsubstituted N-terminal amino acids from various peptides. This chain is Probable cytosol aminopeptidase (pepA), found in Mycoplasma pneumoniae (strain ATCC 29342 / M129 / Subtype 1) (Mycoplasmoides pneumoniae).